A 308-amino-acid chain; its full sequence is Glycine--tRNA ligase alpha subunit (308 aa).

This sequence belongs to the class-II aminoacyl-tRNA synthetase family. As to quaternary structure, tetramer of two alpha and two beta subunits.

It is found in the cytoplasm. It carries out the reaction tRNA(Gly) + glycine + ATP = glycyl-tRNA(Gly) + AMP + diphosphate. This is Glycine--tRNA ligase alpha subunit from Brevibacillus brevis (strain 47 / JCM 6285 / NBRC 100599).